We begin with the raw amino-acid sequence, 219 residues long: 7-cyano-7-deazaguanine synthase (219 aa).

10–20 (FSGGQDSTTCL) is a binding site for ATP. The Zn(2+) site is built by Cys-188, Cys-197, Cys-200, and Cys-203.

Belongs to the QueC family. As to quaternary structure, homodimer. Requires Zn(2+) as cofactor.

The catalysed reaction is 7-carboxy-7-deazaguanine + NH4(+) + ATP = 7-cyano-7-deazaguanine + ADP + phosphate + H2O + H(+). The protein operates within purine metabolism; 7-cyano-7-deazaguanine biosynthesis. Functionally, catalyzes the ATP-dependent conversion of 7-carboxy-7-deazaguanine (CDG) to 7-cyano-7-deazaguanine (preQ(0)). The protein is 7-cyano-7-deazaguanine synthase of Clostridium botulinum (strain Loch Maree / Type A3).